The sequence spans 213 residues: Redox-sensing transcriptional repressor Rex (213 aa).

The segment at residues 18–57 (LYYRIFKRFHAEKIERANSKQIAEAIGIDSATVRRDFSYF) is a DNA-binding region (H-T-H motif). 92–97 (GIGNMG) provides a ligand contact to NAD(+).

Belongs to the transcriptional regulatory Rex family. As to quaternary structure, homodimer.

It localises to the cytoplasm. Functionally, modulates transcription in response to changes in cellular NADH/NAD(+) redox state. Binds to the promoter of the aldehyde-alcohol dehydrogenase adhE gene. Functions as a redox-dependent repressor of adhE expression. This Streptococcus pneumoniae (strain ATCC BAA-255 / R6) protein is Redox-sensing transcriptional repressor Rex.